Consider the following 109-residue polypeptide: uncharacterized protein (109 aa).

This is an uncharacterized protein from Homo sapiens (Human).